The sequence spans 638 residues: Chaperone protein HtpG (638 aa).

Positions 1–343 (MTSTIDSDGA…SADLPLNISR (343 aa)) are a; substrate-binding. The b stretch occupies residues 344–557 (EMIQESPILA…ESGPDRQLEK (214 aa)). The segment at 558 to 638 (ILVGVGQLTG…VERGLRGSTA (81 aa)) is c.

The protein belongs to the heat shock protein 90 family. Homodimer.

The protein localises to the cytoplasm. Molecular chaperone. Has ATPase activity. The chain is Chaperone protein HtpG from Nitrobacter hamburgensis (strain DSM 10229 / NCIMB 13809 / X14).